The primary structure comprises 364 residues: Transposase for insertion sequence element IS1111A (364 aa).

The protein belongs to the transposase IS1111A/IS1328/IS1533 family.

Its function is as follows. Required for the transposition of the insertion element. The chain is Transposase for insertion sequence element IS1111A from Coxiella burnetii (strain RSA 493 / Nine Mile phase I).